A 513-amino-acid polypeptide reads, in one-letter code: Membrane-bound transcription factor site-2 protease homolog (513 aa).

Over M1–W60 the chain is Cytoplasmic. The helical transmembrane segment at F61–L81 threads the bilayer. At Q82–S107 the chain is on the lumenal side. A helical transmembrane segment spans residues L108–G128. Zn(2+) is bound at residue H125. E126 is a catalytic residue. H129 contributes to the Zn(2+) binding site. At H129–G137 the chain is on the cytoplasmic side. The helical transmembrane segment at I138 to F158 threads the bilayer. The Lumenal segment spans residues D159 to N182. A helical transmembrane segment spans residues A183–F203. Residues Y204–S437 lie on the Cytoplasmic side of the membrane. Residues L438–Y458 form a helical membrane-spanning segment. Topologically, residues L459–Q485 are lumenal. Residues V486–G506 form a helical membrane-spanning segment. Topologically, residues L507–W513 are cytoplasmic.

The protein belongs to the peptidase M50A family. Zn(2+) is required as a cofactor. Expressed in the vasculature of roots, cotyledons and leaves.

Its subcellular location is the golgi apparatus membrane. Functionally, metalloprotease that catalyzes the second step (site-2 cleavage) in the proteolytic activation of various factors, after site-1 cleavage. Part of a regulated intramembrane proteolysis (RIP) cascade. After ER stress, cleaves BZIP17 and BZIP28 proteins which function as stress sensors and transducers in ER stress signaling pathway. The N-terminal bZIP component is translocated to the nucleus, where it activates the expression and production of ER chaperones, as well as proteins involved in brassinosteroid (BR) signaling, which is required for stress acclimation and growth. The sequence is that of Membrane-bound transcription factor site-2 protease homolog (S2P) from Arabidopsis thaliana (Mouse-ear cress).